We begin with the raw amino-acid sequence, 1097 residues long: Transmembrane protein 132D (1097 aa).

The N-terminal stretch at 1 to 30 (MCPSEMGTLWYLWSPVLISLAALFSKVTEG) is a signal peptide. Over 31-913 (RGILESIQRF…PDQAAKGLSD (883 aa)) the chain is Extracellular. The segment covering 233-245 (DERGDCAKEDSRK) has biased composition (basic and acidic residues). Disordered stretches follow at residues 233-263 (DERG…SPPL) and 885-906 (SFPD…DPDQ). A helical membrane pass occupies residues 914-934 (LEIGMYALLGVFCLAILVFLI). The Cytoplasmic segment spans residues 935–1097 (NCVTFALKYR…SCMERLHEHV (163 aa)). The disordered stretch occupies residues 1021-1042 (MLTDDKEQKSEPPTSPTSKRKR).

This sequence belongs to the TMEM132 family. Expressed in mature oligodendrocytes in the brain.

It localises to the membrane. Its function is as follows. Regulates neuronal morphology via inhibition of the WAVE regulatory complex (WCR), a complex that controls F-actin cytoskeletal dynamics. In Rattus norvegicus (Rat), this protein is Transmembrane protein 132D (Tmem132d).